A 285-amino-acid polypeptide reads, in one-letter code: MAGAGLIAIKRRIKSINNTKKITKAIGLVATSKLRKARQKLELNNAYYSSVNEIMNGILADKNLEKGIYFKDNGVNKKLYIVITSDSGLCGGFNGNVIAKTLETISGDRENSVIITVGKKGRTYLKKFKIDSIAEFVEIPEIPTLKEVKAILEKALNLYMNKEISEINVVYTHFVSSVKQEAKVKKILPITMEEDSEQTSTFVEFEPDKNIVLEGISELYLKQTLLNLMLNSKTSEESARMTAMDGATSNANDLLDKLNLQYNRIRQSSITQEISEIVGGAQAQE.

The protein belongs to the ATPase gamma chain family. F-type ATPases have 2 components, CF(1) - the catalytic core - and CF(0) - the membrane proton channel. CF(1) has five subunits: alpha(3), beta(3), gamma(1), delta(1), epsilon(1). CF(0) has three main subunits: a, b and c.

The protein resides in the cell membrane. Functionally, produces ATP from ADP in the presence of a proton gradient across the membrane. The gamma chain is believed to be important in regulating ATPase activity and the flow of protons through the CF(0) complex. The polypeptide is ATP synthase gamma chain (Clostridium novyi (strain NT)).